The chain runs to 204 residues: Large ribosomal subunit protein uL4 (204 aa).

Positions 49 to 75 (TKGRSDVSGGGKKPWRQKGRGGARAGS) are disordered.

It belongs to the universal ribosomal protein uL4 family. In terms of assembly, part of the 50S ribosomal subunit.

Its function is as follows. One of the primary rRNA binding proteins, this protein initially binds near the 5'-end of the 23S rRNA. It is important during the early stages of 50S assembly. It makes multiple contacts with different domains of the 23S rRNA in the assembled 50S subunit and ribosome. Forms part of the polypeptide exit tunnel. The polypeptide is Large ribosomal subunit protein uL4 (Campylobacter jejuni subsp. doylei (strain ATCC BAA-1458 / RM4099 / 269.97)).